The chain runs to 440 residues: Replication factor C large subunit (440 aa).

Residue 48–55 (GPPGVGKT) participates in ATP binding.

The protein belongs to the activator 1 small subunits family. RfcL subfamily. As to quaternary structure, heteromultimer composed of small subunits (RfcS) and large subunits (RfcL).

Functionally, part of the RFC clamp loader complex which loads the PCNA sliding clamp onto DNA. The polypeptide is Replication factor C large subunit (Sulfurisphaera tokodaii (strain DSM 16993 / JCM 10545 / NBRC 100140 / 7) (Sulfolobus tokodaii)).